Consider the following 359-residue polypeptide: Guanine nucleotide-binding protein subunit alpha-11 (359 aa).

2 S-palmitoyl cysteine lipidation sites follow: C9 and C10. One can recognise a G-alpha domain in the interval 38 to 359 (RELKLLLLGT…QLNLKEYNLV (322 aa)). The interval 41 to 54 (KLLLLGTGESGKST) is G1 motif. GTP-binding positions include 46-53 (GTGESGKS) and 180-183 (LRVR). S53 lines the Mg(2+) pocket. Residues 178 to 186 (DVLRVRVPT) form a G2 motif region. Residue T186 participates in Mg(2+) binding. The interval 201–210 (FRMVDVGGQR) is G3 motif. The interval 270–277 (ILFLNKKD) is G4 motif. GTP contacts are provided by residues 274-277 (NKKD) and A331. Residues 329-334 (TCATDT) are G5 motif.

The protein belongs to the G-alpha family. G(q) subfamily. As to quaternary structure, g proteins are composed of 3 units; alpha, beta and gamma. The alpha chain contains the guanine nucleotide binding site. Interacts with RGS22. Interacts with NTSR1.

Its subcellular location is the cell membrane. The protein localises to the cytoplasm. It catalyses the reaction GTP + H2O = GDP + phosphate + H(+). Its function is as follows. Guanine nucleotide-binding proteins (G proteins) function as transducers downstream of G protein-coupled receptors (GPCRs) in numerous signaling cascades. The alpha chain contains the guanine nucleotide binding site and alternates between an active, GTP-bound state and an inactive, GDP-bound state. Signaling by an activated GPCR promotes GDP release and GTP binding. The alpha subunit has a low GTPase activity that converts bound GTP to GDP, thereby terminating the signal. Both GDP release and GTP hydrolysis are modulated by numerous regulatory proteins. Signaling is mediated via phospholipase C-beta-dependent inositol lipid hydrolysis for signal propagation: activates phospholipase C-beta: following GPCR activation, GNA11 activates PLC-beta (PLCB1, PLCB2, PLCB3 or PLCB4), leading to production of diacylglycerol (DAG) and inositol 1,4,5-trisphosphate (IP3). Transduces FFAR4 signaling in response to long-chain fatty acids (LCFAs). Together with GNAQ, required for heart development. In the respiratory epithelium, transmits OXGR1-dependent signals that lead to downstream intracellular Ca(2+) release and mucocilliary clearance of airborne pathogens. The chain is Guanine nucleotide-binding protein subunit alpha-11 (Gna11) from Mus musculus (Mouse).